Here is a 347-residue protein sequence, read N- to C-terminus: Trace amine-associated receptor 4 (347 aa).

Over 1-37 the chain is Extracellular; it reads MNSPDLWYSPETQFCFAAANNSCPRKARPALVVCAMY. N-linked (GlcNAc...) asparagine glycosylation is present at Asn-20. 2 disulfide bridges follow: Cys-23–Cys-187 and Cys-106–Cys-191. The chain crosses the membrane as a helical span at residues 38-58; it reads LVMIGAIVMTMLGNMVVIISI. Residues 59 to 69 are Cytoplasmic-facing; sequence AHFKQLHSPTN. A helical membrane pass occupies residues 70–90; sequence FLILSMATTDFLLSCVVMPFS. Topologically, residues 91 to 110 are extracellular; sequence MVRSIESCWYFGDLFCKVHS. Residues 111 to 129 form a helical membrane-spanning segment; sequence CCDIMLCTTSIFHLCFISV. At 130–149 the chain is on the cytoplasmic side; the sequence is DRHYAVCDPLHYVTQITVGV. A helical membrane pass occupies residues 150–170; that stretch reads VGVFLLISWSVPILFAFGLVF. Residues 171–197 are Extracellular-facing; sequence SELNLIGAEDFVAAIDCTGLCVLIFNK. An extracellular Loop 2 (ECL2) region spans residues 175–188; sequence LIGAEDFVAAIDCT. Residues 198 to 218 form a helical membrane-spanning segment; sequence LWGVLASFIAFFLPGAIMVGI. Residues 219 to 260 lie on the Cytoplasmic side of the membrane; it reads YIHIFTVARKHARKIGPGPRTKRALSESKMKATSGKESKATK. Residues 261–281 traverse the membrane as a helical segment; the sequence is TLSIVMGVFVLCWLPFFVLTI. Over 282 to 296 the chain is Extracellular; the sequence is TDPFIGFTTPEDLYN. A helical transmembrane segment spans residues 297–317; it reads VFLWLGYFNSTFNPIIYGMFY. The Cytoplasmic portion of the chain corresponds to 318-347; it reads PWFRKALRMIVTGTIFRSDSSTSSLHPAHP.

The protein belongs to the G-protein coupled receptor 1 family.

The protein localises to the cell membrane. Functionally, olfactory receptor specific for 2-phenylethylamine, a trace amine present at high concentration in the urine of carnivore species, playing a key role in fear and avoidance responses. 2-phenylethylamine acts as a kairomone in the chemical detection of carnivore odor and triggers fear in rats. This receptor is probably mediated by the G(s)-class of G-proteins which activate adenylate cyclase. This is Trace amine-associated receptor 4 from Rattus norvegicus (Rat).